The sequence spans 37 residues: MKVRASVKKICDKCKVIHREGVVRVICTNPKHKQRQG.

The protein belongs to the bacterial ribosomal protein bL36 family.

This chain is Large ribosomal subunit protein bL36, found in Solibacter usitatus (strain Ellin6076).